The sequence spans 122 residues: MSEQKRRTIQIAISEDHYEELQKALELLKGTQLPFSTTVEQFVELILSNYVATSNKISSLAKSGFDVASLQQELEKIGNLSGVDDNLKGFLSELLKTSRNGFSNPNKDGKKNDDDNNSSSKS.

The tract at residues 97 to 122 (TSRNGFSNPNKDGKKNDDDNNSSSKS) is disordered.

This is an uncharacterized protein from Mycoplasma genitalium (strain ATCC 33530 / DSM 19775 / NCTC 10195 / G37) (Mycoplasmoides genitalium).